Reading from the N-terminus, the 353-residue chain is 3'-5' exonuclease (353 aa).

The segment at M1–K119 is disordered. Composition is skewed to basic and acidic residues over residues K13–K30 and K37–A50. Residues T59–R70 show a composition bias toward basic residues. Basic and acidic residues predominate over residues K71–P90. Phosphoserine is present on residues S103, S109, and S111. The 3'-5' exonuclease domain occupies V145 to R313. Positions 162, 164, and 300 each coordinate Mg(2+).

Belongs to the WRNexo family.

Its subcellular location is the nucleus. Functionally, has exonuclease activity on both single-stranded and duplex templates bearing overhangs, but not blunt ended duplex DNA, and cleaves in a 3'-5' direction. Essential for the formation of DNA replication focal centers. Has an important role in maintaining genome stability. The sequence is that of 3'-5' exonuclease from Drosophila melanogaster (Fruit fly).